Here is a 460-residue protein sequence, read N- to C-terminus: Argininosuccinate lyase (460 aa).

The protein belongs to the lyase 1 family. Argininosuccinate lyase subfamily.

Its subcellular location is the cytoplasm. It catalyses the reaction 2-(N(omega)-L-arginino)succinate = fumarate + L-arginine. It participates in amino-acid biosynthesis; L-arginine biosynthesis; L-arginine from L-ornithine and carbamoyl phosphate: step 3/3. This Prosthecochloris aestuarii (strain DSM 271 / SK 413) protein is Argininosuccinate lyase.